The following is a 79-amino-acid chain: Acyl carrier protein 1 (79 aa).

Residues 2–77 enclose the Carrier domain; it reads DNIEQRVKKI…QAIDYARANV (76 aa). At S37 the chain carries O-(pantetheine 4'-phosphoryl)serine.

It belongs to the acyl carrier protein (ACP) family. In terms of processing, 4'-phosphopantetheine is transferred from CoA to a specific serine of apo-ACP by AcpS. This modification is essential for activity because fatty acids are bound in thioester linkage to the sulfhydryl of the prosthetic group.

It localises to the cytoplasm. It functions in the pathway lipid metabolism; fatty acid biosynthesis. Functionally, carrier of the growing fatty acid chain in fatty acid biosynthesis. The protein is Acyl carrier protein 1 of Ralstonia nicotianae (strain ATCC BAA-1114 / GMI1000) (Ralstonia solanacearum).